The chain runs to 395 residues: Elongation factor Tu (395 aa).

The tr-type G domain occupies 10-205 (KVHMNVGTIG…TMDEYFKDPV (196 aa)). The segment at 19–26 (GHVDHGKT) is G1. 19–26 (GHVDHGKT) contributes to the GTP binding site. A Mg(2+)-binding site is contributed by threonine 26. Residues 60–64 (GITIN) form a G2 region. Residues 81 to 84 (DCPG) form a G3 region. Residues 81–85 (DCPGH) and 136–139 (NKVD) contribute to the GTP site. The interval 136-139 (NKVD) is G4. Positions 173 to 175 (SAF) are G5.

Belongs to the TRAFAC class translation factor GTPase superfamily. Classic translation factor GTPase family. EF-Tu/EF-1A subfamily. Monomer.

The protein localises to the cytoplasm. The catalysed reaction is GTP + H2O = GDP + phosphate + H(+). Its function is as follows. GTP hydrolase that promotes the GTP-dependent binding of aminoacyl-tRNA to the A-site of ribosomes during protein biosynthesis. The sequence is that of Elongation factor Tu from Treponema denticola (strain ATCC 35405 / DSM 14222 / CIP 103919 / JCM 8153 / KCTC 15104).